Consider the following 200-residue polypeptide: Recombination protein RecR (200 aa).

The C4-type zinc-finger motif lies at cysteine 57 to cysteine 72. Residues glycine 81–proline 176 form the Toprim domain.

Belongs to the RecR family.

In terms of biological role, may play a role in DNA repair. It seems to be involved in an RecBC-independent recombinational process of DNA repair. It may act with RecF and RecO. The protein is Recombination protein RecR of Aliivibrio salmonicida (strain LFI1238) (Vibrio salmonicida (strain LFI1238)).